A 619-amino-acid polypeptide reads, in one-letter code: 4-hydroxyphenylalkanoate adenylyltransferase (619 aa).

The protein belongs to the ATP-dependent AMP-binding enzyme family.

The catalysed reaction is 17-(4-hydroxyphenyl)heptadecanoate + holo-[(phenol)carboxyphthiodiolenone synthase] + ATP = 17-(4-hydroxyphenyl)heptadecanoyl-[(phenol)carboxyphthiodiolenone synthase] + AMP + diphosphate. It carries out the reaction 19-(4-hydroxyphenyl)nonadecanoate + holo-[(phenol)carboxyphthiodiolenone synthase] + ATP = 19-(4-hydroxyphenyl)nonadecanoyl-[(phenol)carboxyphthiodiolenone synthase] + AMP + diphosphate. It catalyses the reaction dodecanoate + ATP + H(+) = dodecanoyl-AMP + diphosphate. It participates in lipid metabolism; fatty acid biosynthesis. In terms of biological role, catalyzes the activation of long-chain fatty acids as acyl-adenylates (acyl-AMP), which are then transferred to the multifunctional polyketide synthase PpsA for further chain extension. Involved in the biosynthesis of phenolphthiocerol, which is an important intermediate in the biosynthesis of phenolic glycolipid (PGL), also called mycosid B. The protein is 4-hydroxyphenylalkanoate adenylyltransferase (fadD29) of Mycobacterium tuberculosis (strain ATCC 25618 / H37Rv).